Reading from the N-terminus, the 267-residue chain is Small ribosomal subunit protein uS2 (267 aa).

The tract at residues 234-267 (DNAEEELAEAISQEEPSAAEELPDDMADNENEFE) is disordered. The span at 250–267 (SAAEELPDDMADNENEFE) shows a compositional bias: acidic residues.

It belongs to the universal ribosomal protein uS2 family.

The sequence is that of Small ribosomal subunit protein uS2 from Dichelobacter nodosus (strain VCS1703A).